The sequence spans 486 residues: ATP synthase subunit beta (486 aa).

Position 164–171 (164–171 (GGAGVGKT)) interacts with ATP.

It belongs to the ATPase alpha/beta chains family. In terms of assembly, F-type ATPases have 2 components, CF(1) - the catalytic core - and CF(0) - the membrane proton channel. CF(1) has five subunits: alpha(3), beta(3), gamma(1), delta(1), epsilon(1). CF(0) has four main subunits: a(1), b(1), b'(1) and c(9-12).

The protein localises to the cellular thylakoid membrane. The catalysed reaction is ATP + H2O + 4 H(+)(in) = ADP + phosphate + 5 H(+)(out). In terms of biological role, produces ATP from ADP in the presence of a proton gradient across the membrane. The catalytic sites are hosted primarily by the beta subunits. This chain is ATP synthase subunit beta, found in Prochlorococcus marinus (strain AS9601).